The sequence spans 168 residues: Desumoylating isopeptidase 1 (168 aa).

Residues 7–149 (YPVKLYVYDL…FGQALRPFLD (143 aa)) enclose the PPPDE domain. His38 is a catalytic residue. The Nuclear export signal 1 motif lies at 83 to 91 (IFLEYLSSL). Cys108 is an active-site residue. Positions 139-153 (PFGQALRPFLDSIQI) match the Nuclear export signal 2 motif.

Belongs to the DeSI family. As to quaternary structure, homodimer. Interacts with UBQLN4; leading to the export of UBQLN4 from the nucleus.

Its subcellular location is the cytoplasm. It is found in the nucleus. It carries out the reaction S-hexadecanoyl-L-cysteinyl-[protein] + H2O = L-cysteinyl-[protein] + hexadecanoate + H(+). Its function is as follows. Protease which deconjugates SUMO1, SUMO2 and SUMO3 from some substrate proteins. Has isopeptidase but not SUMO-processing activity. Desumoylates ZBTB46. Collaborates with UBQLN4 in the export of ubiquitinated proteins from the nucleus to the cytoplasm. Exhibits palmitoyl protein thioesterase (S-depalmitoylation) activity towards synthetic substrates 4-methylumbelliferyl-6-S-palmitoyl-beta-D-glucopyranoside and S-depalmitoylation probe 5 (DPP-5). The sequence is that of Desumoylating isopeptidase 1 (Desi1) from Rattus norvegicus (Rat).